Here is a 251-residue protein sequence, read N- to C-terminus: Hydroxyacylglutathione hydrolase (251 aa).

Residues His-53, His-55, Asp-57, His-58, His-110, Asp-127, and His-165 each coordinate Zn(2+).

It belongs to the metallo-beta-lactamase superfamily. Glyoxalase II family. In terms of assembly, monomer. The cofactor is Zn(2+).

It catalyses the reaction an S-(2-hydroxyacyl)glutathione + H2O = a 2-hydroxy carboxylate + glutathione + H(+). The protein operates within secondary metabolite metabolism; methylglyoxal degradation; (R)-lactate from methylglyoxal: step 2/2. Functionally, thiolesterase that catalyzes the hydrolysis of S-D-lactoyl-glutathione to form glutathione and D-lactic acid. The sequence is that of Hydroxyacylglutathione hydrolase from Edwardsiella ictaluri (strain 93-146).